Reading from the N-terminus, the 1214-residue chain is Brassinosteroid LRR receptor kinase BRL3 (1214 aa).

Positions methionine 1–alanine 29 are cleaved as a signal peptide. Asparagine 61 carries N-linked (GlcNAc...) asparagine glycosylation. Positions cysteine 69 to cysteine 76 match the Cys pair 1 motif. 22 LRR repeats span residues leucine 103–arginine 127, proline 131–serine 155, cysteine 156–proline 177, proline 178–glycine 202, histidine 204–glutamate 228, serine 230–methionine 250, proline 252–glycine 276, cysteine 277–cysteine 302, arginine 303–valine 325, leucine 327–leucine 351, lysine 353–glutamine 375, arginine 377–asparagine 400, isoleucine 401–cysteine 427, leucine 429–serine 451, leucine 452–cysteine 476, asparagine 478–leucine 500, lysine 502–serine 525, threonine 526–cysteine 549, valine 550–asparagine 572, leucine 573–cysteine 597, asparagine 599–glutamine 621, and glycine 650–serine 673. Asparagine 145, asparagine 163, asparagine 197, and asparagine 210 each carry an N-linked (GlcNAc...) asparagine glycan. N-linked (GlcNAc...) asparagine glycosylation is found at asparagine 254, asparagine 264, and asparagine 279. N-linked (GlcNAc...) asparagine glycosylation is found at asparagine 400 and asparagine 413. Asparagine 466 is a glycosylation site (N-linked (GlcNAc...) asparagine). Asparagine 512 and asparagine 524 each carry an N-linked (GlcNAc...) asparagine glycan. N-linked (GlcNAc...) asparagine glycosylation is present at asparagine 561. Tyrosine 678 provides a ligand contact to brassinolide. 4 LRR repeats span residues asparagine 689–asparagine 712, methionine 713–glycine 736, lysine 738–cysteine 760, and histidine 762–threonine 786. Residues cysteine 799–cysteine 806 carry the Cys pair 2 motif. A helical transmembrane segment spans residues serine 829 to tyrosine 849. The Protein kinase domain maps to phenylalanine 913 to leucine 1196. ATP contacts are provided by residues isoleucine 919–valine 927, lysine 941, glutamate 987–methionine 989, serine 993–phenylalanine 996, aspartate 1039–asparagine 1044, and aspartate 1057. The Proton acceptor role is filled by aspartate 1039.

This sequence belongs to the protein kinase superfamily. Ser/Thr protein kinase family. As to expression, highly expressed in roots. Expressed at low levels in shoots.

The protein localises to the cell membrane. It carries out the reaction L-seryl-[protein] + ATP = O-phospho-L-seryl-[protein] + ADP + H(+). The catalysed reaction is L-threonyl-[protein] + ATP = O-phospho-L-threonyl-[protein] + ADP + H(+). Functionally, may be involved in brassenosteroid (BR) perception in roots. This chain is Brassinosteroid LRR receptor kinase BRL3, found in Oryza sativa subsp. japonica (Rice).